The chain runs to 423 residues: Ferrochelatase, mitochondrial (423 aa).

Residues 1–54 (MRSLGANMAAALRAAGVLLRDPLVSSSWRVYQPWRWKSVAAAAAATTETAQHAQ) constitute a mitochondrion transit peptide. At lysine 57 the chain carries N6-acetyllysine. Arginine 115, tyrosine 123, and serine 130 together coordinate protoporphyrin IX. The residue at position 138 (lysine 138) is an N6-succinyllysine. A [2Fe-2S] cluster-binding site is contributed by cysteine 196. Catalysis depends on residues histidine 230 and aspartate 383. Residues cysteine 403, cysteine 406, and cysteine 411 each coordinate [2Fe-2S] cluster. Lysine 415 is subject to N6-acetyllysine; alternate. Lysine 415 is modified (N6-succinyllysine; alternate).

The protein belongs to the ferrochelatase family. As to quaternary structure, homodimer. Homotetramer. Interaction with PGRMC1; the interaction results in decreased FECH activity. Interacts with ABCB10 and SLC25A37; this interaction forms an oligomeric complex. Forms a complex with ABCB7 and ABCB10, where a dimeric FECH bridges ABCB7 and ABCB10 homodimers; this complex may be required for cellular iron homeostasis, mitochondrial function and heme biosynthesis. Interacts with ABCB7 and ABCB10. [2Fe-2S] cluster is required as a cofactor.

It localises to the mitochondrion inner membrane. The enzyme catalyses heme b + 2 H(+) = protoporphyrin IX + Fe(2+). The protein operates within porphyrin-containing compound metabolism; protoheme biosynthesis; protoheme from protoporphyrin-IX: step 1/1. Catalyzes the ferrous insertion into protoporphyrin IX and participates in the terminal step in the heme biosynthetic pathway. This Pan troglodytes (Chimpanzee) protein is Ferrochelatase, mitochondrial.